The chain runs to 276 residues: 4-hydroxy-tetrahydrodipicolinate reductase (276 aa).

NAD(+) contacts are provided by residues 10-15, D36, and 109-111; these read GALGKM and GTT. The Proton donor/acceptor role is filled by H165. H166 serves as a coordination point for (S)-2,3,4,5-tetrahydrodipicolinate. K169 serves as the catalytic Proton donor. 175–176 contributes to the (S)-2,3,4,5-tetrahydrodipicolinate binding site; sequence GT.

It belongs to the DapB family.

Its subcellular location is the cytoplasm. It carries out the reaction (S)-2,3,4,5-tetrahydrodipicolinate + NAD(+) + H2O = (2S,4S)-4-hydroxy-2,3,4,5-tetrahydrodipicolinate + NADH + H(+). The catalysed reaction is (S)-2,3,4,5-tetrahydrodipicolinate + NADP(+) + H2O = (2S,4S)-4-hydroxy-2,3,4,5-tetrahydrodipicolinate + NADPH + H(+). It functions in the pathway amino-acid biosynthesis; L-lysine biosynthesis via DAP pathway; (S)-tetrahydrodipicolinate from L-aspartate: step 4/4. Catalyzes the conversion of 4-hydroxy-tetrahydrodipicolinate (HTPA) to tetrahydrodipicolinate. The polypeptide is 4-hydroxy-tetrahydrodipicolinate reductase (Prochlorococcus marinus (strain SARG / CCMP1375 / SS120)).